The following is a 203-amino-acid chain: Protein GrpE (203 aa).

Residues 1–38 (MTQDQTAEQMPAAESADQSADQGPAAESAAPPAVDSER) are disordered.

Belongs to the GrpE family. In terms of assembly, homodimer.

The protein resides in the cytoplasm. Its function is as follows. Participates actively in the response to hyperosmotic and heat shock by preventing the aggregation of stress-denatured proteins, in association with DnaK and GrpE. It is the nucleotide exchange factor for DnaK and may function as a thermosensor. Unfolded proteins bind initially to DnaJ; upon interaction with the DnaJ-bound protein, DnaK hydrolyzes its bound ATP, resulting in the formation of a stable complex. GrpE releases ADP from DnaK; ATP binding to DnaK triggers the release of the substrate protein, thus completing the reaction cycle. Several rounds of ATP-dependent interactions between DnaJ, DnaK and GrpE are required for fully efficient folding. The chain is Protein GrpE from Paramagnetospirillum magneticum (strain ATCC 700264 / AMB-1) (Magnetospirillum magneticum).